Reading from the N-terminus, the 597-residue chain is Elongation factor 4 (597 aa).

The tr-type G domain occupies 4-181 (SKIRNFSIIA…AIVDYVPAPK (178 aa)). GTP-binding positions include 16 to 21 (DHGKST) and 128 to 131 (NKID).

Belongs to the TRAFAC class translation factor GTPase superfamily. Classic translation factor GTPase family. LepA subfamily.

It is found in the cell membrane. The catalysed reaction is GTP + H2O = GDP + phosphate + H(+). Its function is as follows. Required for accurate and efficient protein synthesis under certain stress conditions. May act as a fidelity factor of the translation reaction, by catalyzing a one-codon backward translocation of tRNAs on improperly translocated ribosomes. Back-translocation proceeds from a post-translocation (POST) complex to a pre-translocation (PRE) complex, thus giving elongation factor G a second chance to translocate the tRNAs correctly. Binds to ribosomes in a GTP-dependent manner. This Mycoplasmopsis agalactiae (strain NCTC 10123 / CIP 59.7 / PG2) (Mycoplasma agalactiae) protein is Elongation factor 4.